The following is a 282-amino-acid chain: Bifunctional protein FolD (282 aa).

NADP(+)-binding positions include 164-166 and Ser-189; that span reads GRS.

Belongs to the tetrahydrofolate dehydrogenase/cyclohydrolase family. As to quaternary structure, homodimer.

The enzyme catalyses (6R)-5,10-methylene-5,6,7,8-tetrahydrofolate + NADP(+) = (6R)-5,10-methenyltetrahydrofolate + NADPH. It carries out the reaction (6R)-5,10-methenyltetrahydrofolate + H2O = (6R)-10-formyltetrahydrofolate + H(+). It functions in the pathway one-carbon metabolism; tetrahydrofolate interconversion. Catalyzes the oxidation of 5,10-methylenetetrahydrofolate to 5,10-methenyltetrahydrofolate and then the hydrolysis of 5,10-methenyltetrahydrofolate to 10-formyltetrahydrofolate. In Streptococcus suis (strain 98HAH33), this protein is Bifunctional protein FolD.